The chain runs to 306 residues: Phospho-N-acetylmuramoyl-pentapeptide-transferase (306 aa).

The next 10 membrane-spanning stretches (helical) occupy residues 1 to 21 (MDIYSAATLLAEFVLGIIIFP), 49 to 69 (GTPTAGGIVFISLTVIAGLIL), 75 to 95 (LIFTLLFYGFIGFLDDFVSIV), 104 to 124 (AWQKLALQFLFSIWIAYTILQ), 130 to 150 (IFGITVPSWLFYLFTMLLVSG), 160 to 180 (GIDGLAGWVFVTSMIPFMFFS), 182 to 202 (SSMEYKAIFVIIMPLLSFLVY), 209 to 229 (VFMGDTGSLALGAYISTYALM), 234 to 254 (LSLLFFTPIFLLETISVILQV), and 284 to 304 (IVGVFSAWNLAIAIFYIAFFL).

This sequence belongs to the glycosyltransferase 4 family. MraY subfamily. Mg(2+) is required as a cofactor.

The protein resides in the cell inner membrane. It carries out the reaction UDP-N-acetyl-alpha-D-muramoyl-L-alanyl-gamma-D-glutamyl-meso-2,6-diaminopimeloyl-D-alanyl-D-alanine + di-trans,octa-cis-undecaprenyl phosphate = di-trans,octa-cis-undecaprenyl diphospho-N-acetyl-alpha-D-muramoyl-L-alanyl-D-glutamyl-meso-2,6-diaminopimeloyl-D-alanyl-D-alanine + UMP. It participates in cell wall biogenesis; peptidoglycan biosynthesis. Catalyzes the initial step of the lipid cycle reactions in the biosynthesis of the cell wall peptidoglycan: transfers peptidoglycan precursor phospho-MurNAc-pentapeptide from UDP-MurNAc-pentapeptide onto the lipid carrier undecaprenyl phosphate, yielding undecaprenyl-pyrophosphoryl-MurNAc-pentapeptide, known as lipid I. The chain is Phospho-N-acetylmuramoyl-pentapeptide-transferase from Fervidobacterium nodosum (strain ATCC 35602 / DSM 5306 / Rt17-B1).